The sequence spans 87 residues: Small ribosomal subunit protein uS15c (87 aa).

Belongs to the universal ribosomal protein uS15 family. Part of the 30S ribosomal subunit.

It localises to the plastid. The protein localises to the chloroplast. This is Small ribosomal subunit protein uS15c (rps15) from Coffea arabica (Arabian coffee).